The sequence spans 221 residues: Deoxyribose-phosphate aldolase (221 aa).

Asp-89 serves as the catalytic Proton donor/acceptor. Lys-151 acts as the Schiff-base intermediate with acetaldehyde in catalysis. Lys-180 serves as the catalytic Proton donor/acceptor.

The protein belongs to the DeoC/FbaB aldolase family. DeoC type 1 subfamily.

The protein localises to the cytoplasm. The enzyme catalyses 2-deoxy-D-ribose 5-phosphate = D-glyceraldehyde 3-phosphate + acetaldehyde. Its pathway is carbohydrate degradation; 2-deoxy-D-ribose 1-phosphate degradation; D-glyceraldehyde 3-phosphate and acetaldehyde from 2-deoxy-alpha-D-ribose 1-phosphate: step 2/2. Catalyzes a reversible aldol reaction between acetaldehyde and D-glyceraldehyde 3-phosphate to generate 2-deoxy-D-ribose 5-phosphate. The polypeptide is Deoxyribose-phosphate aldolase (Mesomycoplasma hyopneumoniae (strain J / ATCC 25934 / NCTC 10110) (Mycoplasma hyopneumoniae)).